A 190-amino-acid polypeptide reads, in one-letter code: Cathelicidin-3 (190 aa).

The signal sequence occupies residues 1 to 29 (METQMASPSLGRCSLWLLLLGLLLPSASA). Position 30 is a pyrrolidone carboxylic acid (glutamine 30). Positions 30-130 (QALSYREAVL…DLNCNELQSV (101 aa)) are excised as a propeptide. Cystine bridges form between cysteine 85–cysteine 96 and cysteine 107–cysteine 124. Basic residues predominate over residues 133–151 (LRPRRPRLPRPRPRPRPRP). The interval 133 to 190 (LRPRRPRLPRPRPRPRPRPRSLPLPRPQPRRIPRPILLPWRPPRPIPRPQPQPIPRWL) is disordered. The span at 172 to 190 (WRPPRPIPRPQPQPIPRWL) shows a compositional bias: pro residues.

Belongs to the cathelicidin family.

Its subcellular location is the secreted. Its function is as follows. Exerts, in vitro, a potent antimicrobial activity. Probably due to an impairment of the function of the respiratory chain and of energy-dependent activities in the inner membrane of susceptible microorganisms. The sequence is that of Cathelicidin-3 (CATHL3) from Ovis aries (Sheep).